The chain runs to 402 residues: Multidrug resistance protein MdtH (402 aa).

Transmembrane regions (helical) follow at residues 13-33 (YFLL…FPLI), 34-54 (SIRF…ALGL), 99-116 (PWLL…GTLF), 139-159 (LLMM…SWLL), 165-185 (LVCA…AWLL), 214-234 (VLTL…LPIM), 243-263 (AAVK…LYPI), 277-297 (LMAG…VSSV), 300-320 (LFVL…ARET), 340-360 (LGLA…FDSG), and 368-388 (LPWV…WWQF).

It belongs to the major facilitator superfamily. DHA1 family. MdtH (TC 2.A.1.2.21) subfamily.

The protein resides in the cell inner membrane. The chain is Multidrug resistance protein MdtH from Enterobacter sp. (strain 638).